Consider the following 197-residue polypeptide: COMM domain-containing protein 6 (197 aa).

The COMM domain maps to 130–197 (ELVDFHWKIG…KEMSAVLETV (68 aa)).

This sequence belongs to the COMM domain-containing protein 6 family. Component of the commander complex consisting of the CCC subcomplex and the retriever subcomplex. Component of the CCC subcomplex.

The protein resides in the nucleus. Its subcellular location is the cytoplasm. In terms of biological role, scaffold protein in the commander complex that is essential for endosomal recycling of transmembrane cargos; the commander complex is composed of the CCC subcomplex and the retriever subcomplex. May modulate activity of cullin-RING E3 ubiquitin ligase (CRL) complexes. Down-regulates activation of NF-kappa-B. Inhibits TNF-induced NFKB1 activation. This chain is COMM domain-containing protein 6 (commd6), found in Xenopus laevis (African clawed frog).